Here is a 364-residue protein sequence, read N- to C-terminus: Protein FAM81A (364 aa).

A coiled-coil region spans residues 80 to 107 (IRNITAIVKQLNRDIEVLQEQIRARDNI). Residues 275–300 (ARLDKIEESQRRNAEGQRKPEEEKVH) show a composition bias toward basic and acidic residues. The disordered stretch occupies residues 275–301 (ARLDKIEESQRRNAEGQRKPEEEKVHG).

This sequence belongs to the FAM81 family. In terms of assembly, interacts with DLG4/PSD-95, GRIN2B/GLUN2B and SYNGAP1; the interactions facilitate condensate formation. In terms of tissue distribution, highly expressed in brain (at protein level).

Its subcellular location is the postsynaptic density. It is found in the cytoplasm. Facilitates the interaction and assembly of proteins within the postsynaptic density by promoting the condensation of postsynaptic proteins via liquid-liquid phase separation. Required for neuronal activity. Accumulation at the postsynaptic density results in enlargement of dendritic spines. The sequence is that of Protein FAM81A from Rattus norvegicus (Rat).